The sequence spans 482 residues: MGGYLAIVFIPQTNTKSMREKKQKCLKQVRRLSLISPKKYIMPDSIFEQPFVYCGVCHRRTSHGDPLRLTSCAHILCSQHSPLTSKVCPICRSSDISIINLVESKQLPTDIRIFFEPLPPLLESLYNVSQFQLNGLSKQCQYYQNHCLKLREKCARQQQLLYQAKIELDSMAILKKRIQELESVLNHNNVSSMSVGVLPTRNSHQNHYQPPPTVDLTVDDNSLEEFEAKSFIKKLKKNSSLRNSSKNNNGTVTPSTSGRVNKNQPLFMETLNNPNRNSIPPPGMNPNANSNLPNISTIAESTNLNRFSFSPVRVAKGFDGKLPNLDILTNNGSVSSKNISRLSSASLQPSSPLSSSSNRLILPNSNLKELHHSNTPLTSTSTQFPSALEKLKITRKRNNTISGSNRITHNLSSHVRSSGLAFSSSSNSLQQSKLPKSNILKRSNSTQQLTNTHLKSDNHLPPRSSNTVLGSSKKNNKFRRIR.

Disordered regions lie at residues 239–263 (SSLRNSSKNNNGTVTPSTSGRVNKN) and 418–482 (SGLA…RRIR). Residues 240 to 249 (SLRNSSKNNN) show a composition bias toward low complexity. A compositionally biased stretch (polar residues) spans 250 to 263 (GTVTPSTSGRVNKN). Over residues 418–437 (SGLAFSSSSNSLQQSKLPKS) the composition is skewed to low complexity. Polar residues-rich tracts occupy residues 440-453 (LKRSNSTQQLTNTH) and 463-473 (RSSNTVLGSSK).

In terms of assembly, component of the synapsis initiation complex composed of at least ZIP2, ZIP3, MSH4 and MSH5. Also interacts with ZIP1, MRE11, RAD51 and RAD53.

It is found in the nucleus. It localises to the chromosome. In terms of biological role, component of the synapsis initiation complex (SIC) necessary for the synaptonemal complex assembly. Stabilizes the ZIP2 component to the chromosomes. The SIC complex loads onto chromosomes and nucleates ZIP1 polymerization, a molecular zipper that acts to bring homologous chromosomes in close apposition, which is required for meiotic crossover. May also be involved in double strand break repair. The sequence is that of Chromosome stability protein 9 (CST9) from Saccharomyces cerevisiae (strain ATCC 204508 / S288c) (Baker's yeast).